A 386-amino-acid chain; its full sequence is Queuine tRNA-ribosyltransferase (386 aa).

The active-site Proton acceptor is D99. Residues 99–103 (DSGGF), D153, Q198, and G225 contribute to the substrate site. The tract at residues 256 to 262 (GVGKPED) is RNA binding. The active-site Nucleophile is D275. Positions 280–284 (TRNAR) are RNA binding; important for wobble base 34 recognition. 4 residues coordinate Zn(2+): C313, C315, C318, and H344.

It belongs to the queuine tRNA-ribosyltransferase family. As to quaternary structure, homodimer. Within each dimer, one monomer is responsible for RNA recognition and catalysis, while the other monomer binds to the replacement base PreQ1. Zn(2+) serves as cofactor.

It catalyses the reaction 7-aminomethyl-7-carbaguanine + guanosine(34) in tRNA = 7-aminomethyl-7-carbaguanosine(34) in tRNA + guanine. Its pathway is tRNA modification; tRNA-queuosine biosynthesis. Its function is as follows. Catalyzes the base-exchange of a guanine (G) residue with the queuine precursor 7-aminomethyl-7-deazaguanine (PreQ1) at position 34 (anticodon wobble position) in tRNAs with GU(N) anticodons (tRNA-Asp, -Asn, -His and -Tyr). Catalysis occurs through a double-displacement mechanism. The nucleophile active site attacks the C1' of nucleotide 34 to detach the guanine base from the RNA, forming a covalent enzyme-RNA intermediate. The proton acceptor active site deprotonates the incoming PreQ1, allowing a nucleophilic attack on the C1' of the ribose to form the product. After dissociation, two additional enzymatic reactions on the tRNA convert PreQ1 to queuine (Q), resulting in the hypermodified nucleoside queuosine (7-(((4,5-cis-dihydroxy-2-cyclopenten-1-yl)amino)methyl)-7-deazaguanosine). The sequence is that of Queuine tRNA-ribosyltransferase from Acinetobacter baylyi (strain ATCC 33305 / BD413 / ADP1).